Reading from the N-terminus, the 379-residue chain is Succinate--CoA ligase [ADP-forming] subunit beta (379 aa).

The ATP-grasp domain maps to 9–236 (KEIARKYGIE…GRDATPYEKV (228 aa)). Residues Lys46, 53–55 (GRG), Glu92, Val95, and Glu100 contribute to the ATP site. Mg(2+) contacts are provided by Asn192 and Asp206. Substrate is bound by residues Asn256 and 313-315 (GIT).

This sequence belongs to the succinate/malate CoA ligase beta subunit family. In terms of assembly, heterotetramer of two alpha and two beta subunits. Mg(2+) is required as a cofactor.

The catalysed reaction is succinate + ATP + CoA = succinyl-CoA + ADP + phosphate. The enzyme catalyses GTP + succinate + CoA = succinyl-CoA + GDP + phosphate. The protein operates within carbohydrate metabolism; tricarboxylic acid cycle; succinate from succinyl-CoA (ligase route): step 1/1. Succinyl-CoA synthetase functions in the citric acid cycle (TCA), coupling the hydrolysis of succinyl-CoA to the synthesis of either ATP or GTP and thus represents the only step of substrate-level phosphorylation in the TCA. The beta subunit provides nucleotide specificity of the enzyme and binds the substrate succinate, while the binding sites for coenzyme A and phosphate are found in the alpha subunit. This is Succinate--CoA ligase [ADP-forming] subunit beta from Desulfurococcus amylolyticus (strain DSM 18924 / JCM 16383 / VKM B-2413 / 1221n) (Desulfurococcus kamchatkensis).